The primary structure comprises 152 residues: Endoribonuclease YbeY (152 aa).

Zn(2+)-binding residues include His-118, His-122, and His-128.

This sequence belongs to the endoribonuclease YbeY family. The cofactor is Zn(2+).

The protein resides in the cytoplasm. Functionally, single strand-specific metallo-endoribonuclease involved in late-stage 70S ribosome quality control and in maturation of the 3' terminus of the 16S rRNA. In Lacticaseibacillus casei (strain BL23) (Lactobacillus casei), this protein is Endoribonuclease YbeY.